Reading from the N-terminus, the 472-residue chain is 3-isopropylmalate dehydratase large subunit (472 aa).

[4Fe-4S] cluster-binding residues include cysteine 353, cysteine 414, and cysteine 417.

The protein belongs to the aconitase/IPM isomerase family. LeuC type 1 subfamily. In terms of assembly, heterodimer of LeuC and LeuD. It depends on [4Fe-4S] cluster as a cofactor.

It catalyses the reaction (2R,3S)-3-isopropylmalate = (2S)-2-isopropylmalate. It participates in amino-acid biosynthesis; L-leucine biosynthesis; L-leucine from 3-methyl-2-oxobutanoate: step 2/4. Catalyzes the isomerization between 2-isopropylmalate and 3-isopropylmalate, via the formation of 2-isopropylmaleate. The sequence is that of 3-isopropylmalate dehydratase large subunit from Acinetobacter baumannii (strain ACICU).